The following is a 342-amino-acid chain: MTTLTITRPDDWHLHLRDGDVLTDTVRDSGRYNGRALIMPNLVPPVTTTEQALSYRERIQAENKSDSFAPLMSLYLTEKTTSEEIRKAKATGHIVAAKLYPAGATTNSDSGVSDIKKVYPILKTMQEEGMLLLIHGEVTTHDVDIFDREKTFLDTVLAPIVNDFPELKIVLEHITTKDAADFVKNAGPNVAATITAHHLLFNRNHMLVGGIKPHFYCLPILKRNTHQQALVEAATSGNPKFFLGTDSAPHAKDKKEAACGCAGSYTAHASIELYAEVFENEGKLENLEAFASFNGPDFYNLPRNTDTITLVKEAWIAPETMAFGNDFVVPIRAGEAVEWLVK.

The Zn(2+) site is built by His-13 and His-15. Substrate contacts are provided by residues 15–17 (HLR) and Asn-41. The Zn(2+) site is built by Lys-98, His-135, and His-173. At Lys-98 the chain carries N6-carboxylysine. His-135 is a substrate binding site. Leu-218 is a binding site for substrate. Position 246 (Asp-246) interacts with Zn(2+). Asp-246 is an active-site residue. Residues His-250 and Ala-262 each coordinate substrate.

The protein belongs to the metallo-dependent hydrolases superfamily. DHOase family. Class II DHOase subfamily. As to quaternary structure, homodimer. It depends on Zn(2+) as a cofactor.

The catalysed reaction is (S)-dihydroorotate + H2O = N-carbamoyl-L-aspartate + H(+). Its pathway is pyrimidine metabolism; UMP biosynthesis via de novo pathway; (S)-dihydroorotate from bicarbonate: step 3/3. Its function is as follows. Catalyzes the reversible cyclization of carbamoyl aspartate to dihydroorotate. In Aliivibrio fischeri (strain MJ11) (Vibrio fischeri), this protein is Dihydroorotase.